We begin with the raw amino-acid sequence, 199 residues long: dTTP/UTP pyrophosphatase (199 aa).

Asp79 (proton acceptor) is an active-site residue.

The protein belongs to the Maf family. YhdE subfamily. A divalent metal cation serves as cofactor.

The protein resides in the cytoplasm. The enzyme catalyses dTTP + H2O = dTMP + diphosphate + H(+). It carries out the reaction UTP + H2O = UMP + diphosphate + H(+). Its function is as follows. Nucleoside triphosphate pyrophosphatase that hydrolyzes dTTP and UTP. May have a dual role in cell division arrest and in preventing the incorporation of modified nucleotides into cellular nucleic acids. The protein is dTTP/UTP pyrophosphatase of Porphyromonas gingivalis (strain ATCC 33277 / DSM 20709 / CIP 103683 / JCM 12257 / NCTC 11834 / 2561).